The following is a 299-amino-acid chain: Muscleblind-like protein (299 aa).

C3H1-type zinc fingers lie at residues 38-66 (WLQVEVCREFLRGQCARSDQECKFAHPPP) and 72-100 (QGRVTACYDSIKGRCTRENPKCKYLHPPQ).

The protein belongs to the muscleblind family.

The protein localises to the nucleus. In terms of biological role, binds to RNA with repeat sequences CUG and CCUG. The polypeptide is Muscleblind-like protein (Caenorhabditis briggsae).